Consider the following 277-residue polypeptide: Carbonyl reductase [NADPH] 3 (277 aa).

Ser-2 carries the post-translational modification N-acetylserine. NADP(+)-binding positions include 10–34 (VTGA…GDVV), 38–42 (RDEAR), 63–64 (DI), and Asn-90. A Phosphoserine modification is found at Ser-30. Residue Ser-140 coordinates substrate. The active-site Proton acceptor is the Tyr-194. 194–198 (YGVSK) serves as a coordination point for NADP(+).

It belongs to the short-chain dehydrogenases/reductases (SDR) family.

It is found in the cytoplasm. It carries out the reaction a secondary alcohol + NADP(+) = a ketone + NADPH + H(+). It catalyses the reaction a quinone + NADPH + H(+) = a quinol + NADP(+). Catalyzes the NADPH-dependent reduction of carbonyl compounds to their corresponding alcohols. Has low NADPH-dependent oxidoreductase activity. Acts on several orthoquinones, as well as on non-quinone compounds, such as isatin or on the anticancer drug oracin. Best substrates for CBR3 is 1,2- naphthoquinone, hence could play a role in protection against cytotoxicity of exogenous quinones. Exerts activity toward ortho-quinones but not paraquinones. No endogenous substrate for CBR3 except isatin has been identified. This is Carbonyl reductase [NADPH] 3 from Rattus norvegicus (Rat).